Consider the following 257-residue polypeptide: Lysine-rich coiled-coil protein 1 (257 aa).

Residues 145-257 (NTSAHQASYK…MLWDQSILGF (113 aa)) are disordered. Residues 152-162 (SYKHIHQKRKR) are compositionally biased toward basic residues. Composition is skewed to basic and acidic residues over residues 163-176 (HTEE…EERP), 183-193 (ACEEIDLDKYK), 200-212 (TEAE…TEKL), and 219-228 (RSRDVASKKE). Residues 210 to 248 (EKLKNRKEKRSRDVASKKEERKRRKEKKEQGQERTEEEM) are a coiled coil.

The chain is Lysine-rich coiled-coil protein 1 (KRCC1) from Bos taurus (Bovine).